We begin with the raw amino-acid sequence, 558 residues long: Kelch-like protein 23 (558 aa).

The BTB domain occupies 36 to 104 (TDITLQCPSG…AYTSQIEITK (69 aa)). The BACK domain maps to 139 to 240 (CIGMHSFAEF…DPVYLKTALG (102 aa)). Kelch repeat units follow at residues 274–320 (TMYI…CLGP), 321–369 (NIYV…TLGG), 370–416 (CVYA…VLHE), 418–466 (IYVI…PFEN), 467–508 (KLYL…IMNG), and 510–557 (IYVT…CVYN).

The sequence is that of Kelch-like protein 23 (Klhl23) from Mus musculus (Mouse).